A 148-amino-acid chain; its full sequence is 3-dehydroquinate dehydratase (148 aa).

The Proton acceptor role is filled by Tyr23. 3 residues coordinate substrate: Asn75, His81, and Asp88. The Proton donor role is filled by His101. Substrate is bound by residues 102–103 (LS) and Arg112.

The protein belongs to the type-II 3-dehydroquinase family. Homododecamer.

It catalyses the reaction 3-dehydroquinate = 3-dehydroshikimate + H2O. It functions in the pathway metabolic intermediate biosynthesis; chorismate biosynthesis; chorismate from D-erythrose 4-phosphate and phosphoenolpyruvate: step 3/7. In terms of biological role, catalyzes a trans-dehydration via an enolate intermediate. This chain is 3-dehydroquinate dehydratase, found in Cellvibrio japonicus (strain Ueda107) (Pseudomonas fluorescens subsp. cellulosa).